Consider the following 182-residue polypeptide: Small ribosomal subunit protein uS4c (182 aa).

A disordered region spans residues 12–31 (PGFTSKRPRSGSDLKNPLRS). Residues 82–143 (MRLDNILFRL…KQRSKALIQN (62 aa)) form the S4 RNA-binding domain.

This sequence belongs to the universal ribosomal protein uS4 family. Part of the 30S ribosomal subunit. Contacts protein S5. The interaction surface between S4 and S5 is involved in control of translational fidelity.

The protein resides in the plastid. Its subcellular location is the chloroplast. One of the primary rRNA binding proteins, it binds directly to 16S rRNA where it nucleates assembly of the body of the 30S subunit. Functionally, with S5 and S12 plays an important role in translational accuracy. This is Small ribosomal subunit protein uS4c (rps4) from Hymenocallis littoralis (Beach spider-lily).